The following is a 228-amino-acid chain: UPF0758 protein CTC_02075 (228 aa).

The MPN domain maps to 106–228 (NITNPKDAAY…YISLKEKDIL (123 aa)). Zn(2+) contacts are provided by His177, His179, and Asp190. The short motif at 177-190 (HNHPSGDTTPSKED) is the JAMM motif element.

It belongs to the UPF0758 family.

The chain is UPF0758 protein CTC_02075 from Clostridium tetani (strain Massachusetts / E88).